The following is a 511-amino-acid chain: Spermatogenesis-associated protein 2 (511 aa).

In terms of domain architecture, PUB spans A77–S149. A PIM motif motif is present at residues T320 to R337.

It belongs to the SPATA2 family. In terms of assembly, interacts (via the PIM motif) with RNF31/HOIP (via the PUB domain); the interaction is direct. Interacts (via the PUB domain) with CYLD; the interaction is direct. Expressed in the testis and to a lesser extent in the brain, while skeletal muscle and kidney show weak expression.

It is found in the cytoplasm. The protein resides in the nucleus. In terms of biological role, bridging factor that mediates the recruitment of CYLD to the LUBAC complex, thereby regulating TNF-alpha-induced necroptosis. Acts as a direct binding intermediate that bridges RNF31/HOIP, the catalytic subunit of the LUBAC complex, and the deubiquitinase (CYLD), thereby recruiting CYLD to the TNF-R1 signaling complex (TNF-RSC). Required to activate the 'Met-1'- (linear) and 'Lys-63'-linked deubiquitinase activities of CYLD. Controls the kinase activity of RIPK1 and TNF-alpha-induced necroptosis by promoting 'Met-1'-linked deubiquitination of RIPK1 by CYLD. This chain is Spermatogenesis-associated protein 2, found in Rattus norvegicus (Rat).